A 782-amino-acid polypeptide reads, in one-letter code: Potassium transporter 6 (782 aa).

Topologically, residues 1–18 (MEIESGSYQNAKKESWRT) are cytoplasmic. Residues 19–39 (VLTLAYQSLGVVYGDLSISPL) traverse the membrane as a helical segment. Over 40–61 (YVYKSTFAEDIHHSESNEEIFG) the chain is Extracellular. Residues 62 to 82 (VLSFIFWTITLVPLLKYVFIV) form a helical membrane-spanning segment. At 83–153 (LRADDNGEGG…TLEKHGVLQK (71 aa)) the chain is on the cytoplasmic side. Residues 154–174 (ILLVLALIGTCMVIGDGVLTP) traverse the membrane as a helical segment. At 175–195 (AISVFSAVSGVELSMSKEHHK) the chain is on the extracellular side. The helical transmembrane segment at 196-216 (YIELPAACVILIGLFALQHYG) threads the bilayer. The Cytoplasmic segment spans residues 217 to 219 (THR). Residues 220–240 (VGFLFAPVILLWLMCISAIGV) traverse the membrane as a helical segment. The Extracellular segment spans residues 241–270 (YNIFHWNPHVYQALSPYYMYKFLKKTQSRG). Residues 271–291 (WMSLGGILLCITGSEAMFADL) traverse the membrane as a helical segment. The Cytoplasmic portion of the chain corresponds to 292-296 (GHFSQ). Residues 297–317 (LSIKIAFTSLVYPSLILAYMG) form a helical membrane-spanning segment. Over 318–347 (QAAYLSQHHIIESEYNIGFYVSVPERLRWP) the chain is Extracellular. Residues 348–368 (VLVIAILAAVVGSQAIITGTF) form a helical membrane-spanning segment. The Cytoplasmic segment spans residues 369-395 (SIIKQCSALGCFPKVKIVHTSSKIHGQ). Residues 396 to 416 (IYIPEINWILMVLCLAVTIGF) traverse the membrane as a helical segment. Over 417–421 (RDTKR) the chain is Extracellular. 2 consecutive transmembrane segments (helical) span residues 422-442 (LGNA…CLMS) and 443-463 (LVIV…VVFF). The Extracellular segment spans residues 464–474 (GTIESLYFSAS). Residues 475 to 495 (LIKFLEGAWVPIALAFCFLLA) traverse the membrane as a helical segment. The Cytoplasmic segment spans residues 496–782 (MCTWHYGTLK…TLEVGMIYNV (287 aa)). Residues 664–675 (YESDIDDPDKPG) show a composition bias toward basic and acidic residues. The disordered stretch occupies residues 664-693 (YESDIDDPDKPGTSEIRSPKPKKKSKSKVK). Residues 682–693 (PKPKKKSKSKVK) are compositionally biased toward basic residues.

Belongs to the HAK/KUP transporter (TC 2.A.72.3) family.

The protein localises to the cell membrane. Its function is as follows. Probable potassium transporter. The polypeptide is Potassium transporter 6 (POT6) (Arabidopsis thaliana (Mouse-ear cress)).